A 256-amino-acid chain; its full sequence is Thioredoxin-dependent peroxide reductase, mitochondrial (256 aa).

The N-terminal 61 residues, 1–61 (MAAAVGRLLR…KLFSTSSSCH (61 aa)), are a transit peptide targeting the mitochondrion. A Thioredoxin domain is found at 63–221 (PAVTQHAPYF…TLRLVKAFQY (159 aa)). Lys-83 is subject to N6-succinyllysine. Lys-91 is subject to N6-acetyllysine; alternate. N6-succinyllysine; alternate is present on Lys-91. The active-site Cysteine sulfenic acid (-SOH) intermediate is Cys-108. Thr-146 is modified (phosphothreonine).

Belongs to the peroxiredoxin family. AhpC/Prx1 subfamily. Homodimer; disulfide-linked, upon oxidation. 6 homodimers assemble to form a ring-like dodecamer. Interacts with NEK6. Interacts with LRRK2. Interacts with MAP3K13. Interacts with RPS6KC1 (via PX domain). Phosphorylated by LRRK2; phosphorylation reduces perodixase activity. In terms of processing, the enzyme can be inactivated by further oxidation of the cysteine sulfenic acid (C(P)-SOH) to sulphinic acid (C(P)-SO2H) and sulphonic acid (C(P)-SO3H) instead of its condensation to a disulfide bond. Post-translationally, S-palmitoylated.

Its subcellular location is the mitochondrion. It is found in the cytoplasm. The protein resides in the early endosome. It carries out the reaction a hydroperoxide + [thioredoxin]-dithiol = an alcohol + [thioredoxin]-disulfide + H2O. Functionally, thiol-specific peroxidase that catalyzes the reduction of hydrogen peroxide and organic hydroperoxides to water and alcohols, respectively. Plays a role in cell protection against oxidative stress by detoxifying peroxides. Acts synergistically with MAP3K13 to regulate the activation of NF-kappa-B in the cytosol. Required for the maintenance of physical strength. The chain is Thioredoxin-dependent peroxide reductase, mitochondrial (PRDX3) from Homo sapiens (Human).